A 301-amino-acid chain; its full sequence is Phosphatidylglycerol--prolipoprotein diacylglyceryl transferase (301 aa).

The next 3 membrane-spanning stretches (helical) occupy residues Leu-17–Gly-37, Met-59–Tyr-79, and Gly-97–Tyr-117. Residue Arg-142 coordinates a 1,2-diacyl-sn-glycero-3-phospho-(1'-sn-glycerol). 2 helical membrane passes run Met-230–Phe-250 and Leu-265–Trp-285.

Belongs to the Lgt family.

It is found in the cell inner membrane. It carries out the reaction L-cysteinyl-[prolipoprotein] + a 1,2-diacyl-sn-glycero-3-phospho-(1'-sn-glycerol) = an S-1,2-diacyl-sn-glyceryl-L-cysteinyl-[prolipoprotein] + sn-glycerol 1-phosphate + H(+). Its pathway is protein modification; lipoprotein biosynthesis (diacylglyceryl transfer). In terms of biological role, catalyzes the transfer of the diacylglyceryl group from phosphatidylglycerol to the sulfhydryl group of the N-terminal cysteine of a prolipoprotein, the first step in the formation of mature lipoproteins. In Paraburkholderia phytofirmans (strain DSM 17436 / LMG 22146 / PsJN) (Burkholderia phytofirmans), this protein is Phosphatidylglycerol--prolipoprotein diacylglyceryl transferase.